A 116-amino-acid polypeptide reads, in one-letter code: Peptidyl-tRNA hydrolase (116 aa).

It belongs to the PTH2 family.

The protein localises to the cytoplasm. It catalyses the reaction an N-acyl-L-alpha-aminoacyl-tRNA + H2O = an N-acyl-L-amino acid + a tRNA + H(+). Its function is as follows. The natural substrate for this enzyme may be peptidyl-tRNAs which drop off the ribosome during protein synthesis. In Methanococcus maripaludis (strain C6 / ATCC BAA-1332), this protein is Peptidyl-tRNA hydrolase.